Here is a 393-residue protein sequence, read N- to C-terminus: Phosphopentomutase (393 aa).

6 residues coordinate Mn(2+): Asp-14, Asp-287, His-292, Asp-328, His-329, and His-340.

The protein belongs to the phosphopentomutase family. Mn(2+) is required as a cofactor.

The protein localises to the cytoplasm. The enzyme catalyses 2-deoxy-alpha-D-ribose 1-phosphate = 2-deoxy-D-ribose 5-phosphate. It carries out the reaction alpha-D-ribose 1-phosphate = D-ribose 5-phosphate. It participates in carbohydrate degradation; 2-deoxy-D-ribose 1-phosphate degradation; D-glyceraldehyde 3-phosphate and acetaldehyde from 2-deoxy-alpha-D-ribose 1-phosphate: step 1/2. In terms of biological role, isomerase that catalyzes the conversion of deoxy-ribose 1-phosphate (dRib-1-P) and ribose 1-phosphate (Rib-1-P) to deoxy-ribose 5-phosphate (dRib-5-P) and ribose 5-phosphate (Rib-5-P), respectively. This is Phosphopentomutase from Geobacillus stearothermophilus (Bacillus stearothermophilus).